The chain runs to 412 residues: uncharacterized protein (412 aa).

Residues C62, C68, C71, and C143 each contribute to the [4Fe-4S] cluster site. Q243, F270, E290, and D338 together coordinate S-adenosyl-L-methionine. Catalysis depends on C364, which acts as the Nucleophile.

The protein belongs to the class I-like SAM-binding methyltransferase superfamily. RNA M5U methyltransferase family.

This is an uncharacterized protein from Mesorhizobium japonicum (strain LMG 29417 / CECT 9101 / MAFF 303099) (Mesorhizobium loti (strain MAFF 303099)).